Here is a 230-residue protein sequence, read N- to C-terminus: uncharacterized protein (230 aa).

This is an uncharacterized protein from Aquifex aeolicus (strain VF5).